Here is a 448-residue protein sequence, read N- to C-terminus: UPF0053 protein sll0260 (448 aa).

In terms of domain architecture, CNNM transmembrane spans 2-203; the sequence is FSSSVELELF…AQAGMIDEAE (202 aa). Helical transmembrane passes span 11 to 31, 62 to 82, 106 to 126, and 142 to 162; these read FFIF…IAIV, FLSA…AVGG, LSIS…GELV, and VAPA…LLGV. 2 CBS domains span residues 222-281 and 286-345; these read MTPR…GQKI and IVQP…NDDE.

It belongs to the UPF0053 family.

Its subcellular location is the cell membrane. The protein is UPF0053 protein sll0260 of Synechocystis sp. (strain ATCC 27184 / PCC 6803 / Kazusa).